We begin with the raw amino-acid sequence, 283 residues long: Elongation factor Ts (283 aa).

The involved in Mg(2+) ion dislocation from EF-Tu stretch occupies residues 80 to 83 (TDFV).

Belongs to the EF-Ts family.

Its subcellular location is the cytoplasm. Associates with the EF-Tu.GDP complex and induces the exchange of GDP to GTP. It remains bound to the aminoacyl-tRNA.EF-Tu.GTP complex up to the GTP hydrolysis stage on the ribosome. The protein is Elongation factor Ts of Enterobacter sp. (strain 638).